The chain runs to 204 residues: Casparian strip membrane protein 2 (204 aa).

Over 1–42 the chain is Cytoplasmic; that stretch reads MKNESTTIDVPAESSSAMKGKAPLIGVARDHTTSGSGGYNRG. Residues 43-63 traverse the membrane as a helical segment; sequence LSIFDFLLRLAAIVAALAAAA. The Extracellular portion of the chain corresponds to 64-92; sequence TMGTSDETLPFFTQFLQFEASYDDLPTFQ. The chain crosses the membrane as a helical span at residues 93–113; the sequence is FFVIAMALVGGYLVLSLPISV. Residues 114-125 are Cytoplasmic-facing; the sequence is VTILRPLATAPR. The chain crosses the membrane as a helical span at residues 126-146; sequence LLLLVLDTAVLALNTAAASSA. At 147–178 the chain is on the extracellular side; that stretch reads AAISYLAHSGNQNTNWLPICQQFGDFCQKSSG. The chain crosses the membrane as a helical span at residues 179–199; sequence AVVSAFISVVFFTILVVISGV. Residues 200–204 are Cytoplasmic-facing; sequence ALKRH.

The protein belongs to the Casparian strip membrane proteins (CASP) family. Homodimer and heterodimers.

It localises to the cell membrane. Functionally, regulates membrane-cell wall junctions and localized cell wall deposition. Required for establishment of the Casparian strip membrane domain (CSD) and the subsequent formation of Casparian strips, a cell wall modification of the root endodermis that determines an apoplastic barrier between the intraorganismal apoplasm and the extraorganismal apoplasm and prevents lateral diffusion. The protein is Casparian strip membrane protein 2 of Arabidopsis lyrata subsp. lyrata (Lyre-leaved rock-cress).